The chain runs to 198 residues: Recombination protein RecR (198 aa).

The segment at C57 to C72 adopts a C4-type zinc-finger fold. In terms of domain architecture, Toprim spans S80–P175.

The protein belongs to the RecR family.

Functionally, may play a role in DNA repair. It seems to be involved in an RecBC-independent recombinational process of DNA repair. It may act with RecF and RecO. The protein is Recombination protein RecR of Bacillus licheniformis (strain ATCC 14580 / DSM 13 / JCM 2505 / CCUG 7422 / NBRC 12200 / NCIMB 9375 / NCTC 10341 / NRRL NRS-1264 / Gibson 46).